Consider the following 403-residue polypeptide: Acetate kinase (403 aa).

Asn-7 lines the Mg(2+) pocket. Residue Lys-14 coordinates ATP. Position 97 (Arg-97) interacts with substrate. Residue Asp-154 is the Proton donor/acceptor of the active site. ATP is bound by residues 213–217 (HLGNG), 287–289 (DMR), and 335–339 (GIGEN). Glu-388 is a Mg(2+) binding site.

The protein belongs to the acetokinase family. In terms of assembly, homodimer. Mg(2+) is required as a cofactor. Mn(2+) serves as cofactor.

The protein localises to the cytoplasm. It carries out the reaction acetate + ATP = acetyl phosphate + ADP. It participates in metabolic intermediate biosynthesis; acetyl-CoA biosynthesis; acetyl-CoA from acetate: step 1/2. In terms of biological role, catalyzes the formation of acetyl phosphate from acetate and ATP. Can also catalyze the reverse reaction. The sequence is that of Acetate kinase from Synechococcus sp. (strain JA-2-3B'a(2-13)) (Cyanobacteria bacterium Yellowstone B-Prime).